A 114-amino-acid chain; its full sequence is Adapter SH3BGRL (114 aa).

The tract at residues 13 to 50 is required for interaction with HER2; the sequence is SMAIKKKQQDVLGFLEANKIGFEEKDIAANEENRKWMR. The segment at 54-71 is required for interaction with PFN1, HER2, and ATG12; sequence PENSRPATGYPLPPQIFN. The short motif at 61–67 is the SH3-binding element; sequence TGYPLPP.

The protein belongs to the SH3BGR family. As to quaternary structure, monomer. Interacts with PFN1/Profilin-1. Interacts with ERBB2. Interacts with ATG12. Interacts with BECN1. Interacts with translating ribosomes.

It localises to the cytoplasm. Its subcellular location is the cytosol. The protein resides in the cell membrane. Appears to function as an adapter protein that bridges proteins together or proteins with mRNAs. May function as a ubiquitin ligase-substrate adapter. Additionally, associates with translating cytoplasmic ribosomes and may promote the expression of specific mRNAs. In Bos taurus (Bovine), this protein is Adapter SH3BGRL (SH3BGRL).